The chain runs to 326 residues: Putative ABC transporter ATP-binding protein MPN_334 (326 aa).

One can recognise an ABC transporter domain in the interval 7–239 (VEVKHLEKEF…NFGYRLKVNN (233 aa)). Residue 42-49 (GQNGAGKT) participates in ATP binding.

It belongs to the ABC transporter superfamily.

This is Putative ABC transporter ATP-binding protein MPN_334 from Mycoplasma pneumoniae (strain ATCC 29342 / M129 / Subtype 1) (Mycoplasmoides pneumoniae).